The sequence spans 170 residues: Ubiquitin-conjugating enzyme E2 G1 (170 aa).

Methionine 1 is modified (N-acetylmethionine). Position 2 is an N-acetylthreonine; in Ubiquitin-conjugating enzyme E2 G1, N-terminally processed (threonine 2). One can recognise a UBC core domain in the interval 5-166; sequence QSALLLRRQL…VARCVRKSQE (162 aa). Catalysis depends on cysteine 90, which acts as the Glycyl thioester intermediate.

The protein belongs to the ubiquitin-conjugating enzyme family. In terms of processing, autoubiquitinated in vitro. Widely expressed, mainly in skeletal muscle.

The enzyme catalyses S-ubiquitinyl-[E1 ubiquitin-activating enzyme]-L-cysteine + [E2 ubiquitin-conjugating enzyme]-L-cysteine = [E1 ubiquitin-activating enzyme]-L-cysteine + S-ubiquitinyl-[E2 ubiquitin-conjugating enzyme]-L-cysteine.. Its pathway is protein modification; protein ubiquitination. Its function is as follows. Accepts ubiquitin from the E1 complex and catalyzes its covalent attachment to other proteins. In vitro catalyzes 'Lys-48'-, as well as 'Lys-63'-linked polyubiquitination. May be involved in degradation of muscle-specific proteins. Mediates polyubiquitination of CYP3A4. The chain is Ubiquitin-conjugating enzyme E2 G1 (UBE2G1) from Homo sapiens (Human).